The sequence spans 116 residues: Vesicle-associated membrane protein 2 (116 aa).

The segment at 1–28 (MSATAATVPPAAPAGEGGPPAPPPNLTS) is disordered. Ser-2 is modified (N-acetylserine). Topologically, residues 2 to 94 (SATAATVPPA…KRKYWWKNLK (93 aa)) are cytoplasmic. Residues 31–91 (RLQQTQAQVD…AKLKRKYWWK (61 aa)) form the v-SNARE coiled-coil homology domain. A required for interaction with SEPT8 region spans residues 92–116 (NLKMMIILGVICAIILIIIIVYFST). The helical; Anchor for type IV membrane protein transmembrane segment at 95-114 (MMIILGVICAIILIIIIVYF) threads the bilayer. Over 115–116 (ST) the chain is Vesicular.

It belongs to the synaptobrevin family. Part of the SNARE core complex containing SNAP25, VAMP2 and STX1A; this complex constitutes the basic catalytic machinery of the complex neurotransmitter release apparatus. Recruited to the SNARE complex following binding of the SNARE complex component STX1A to STXBP1. This complex binds to CPLX1. Interacts with VAPA and VAPB. Interacts (via N-terminus) with KCNB1 (via N-terminus and C-terminus); stimulates the channel inactivation rate of KCNB1. Interacts with POPDC1 and STX4. Interacts with WDFY2, PRKCZ and PRKCI. Forms a complex with WDFY2 and PRKCZ. Interacts with SEPT8; the interaction inhibits interaction of VAMP2 with SYP. Interacts with SYP; the interaction is inhibited by interaction with SEPT8. Interacts with PICALM. Interacts with alpha-synuclein/SNCA. Interacts with STX3 isoform 3B. In terms of processing, phosphorylated by PRKCZ in vitro and this phosphorylation is increased in the presence of WDFY2. Post-translationally, (Microbial infection) Targeted and hydrolyzed by C.botulinum neurotoxin type B (BoNT/B, botB); 20 hours after treatment of spinal cord cells almost all the protein has been digested. BoNT/B hydrolyzes the 76-Gln-|-Phe-77 bond and inhibits neurotransmitter release. (Microbial infection) Targeted and hydrolyzed by C.tetani toxin (tetX); 20 hours after treatment of spinal cord cells almost all the protein has been digested. Tetanus toxin hydrolyzes the 76-Gln-|-Phe-77 bond and inhibits neurotransmitter release. Expressed in the outer plexiform layer of the retina (at protein level).

The protein resides in the cytoplasmic vesicle. It localises to the secretory vesicle. It is found in the synaptic vesicle membrane. Its subcellular location is the cell membrane. Involved in the targeting and/or fusion of transport vesicles to their target membrane. Major SNARE protein of synaptic vesicles which mediates fusion of synaptic vesicles to release neurotransmitters. Essential for fast vesicular exocytosis and activity-dependent neurotransmitter release as well as fast endocytosis that mediates rapid reuse of synaptic vesicles. Modulates the gating characteristics of the delayed rectifier voltage-dependent potassium channel KCNB1. The polypeptide is Vesicle-associated membrane protein 2 (Vamp2) (Mus musculus (Mouse)).